We begin with the raw amino-acid sequence, 217 residues long: AFG2-interacting ribosome maturation factor (217 aa).

As to quaternary structure, part of the 55LCC heterohexameric ATPase complex composed at least of AIRIM, AFG2A, AFG2B and CINP. Does not associate with pre-60S ribosomal particles. Phosphorylated on serines by CK2 kinase.

Its subcellular location is the nucleus. The protein localises to the cytoplasm. Part of the 55LCC heterohexameric ATPase complex which is chromatin-associated and promotes replisome proteostasis to maintain replication fork progression and genome stability. Required for replication fork progression, sister chromatid cohesion, and chromosome stability. The ATPase activity is specifically enhanced by replication fork DNA and is coupled to cysteine protease-dependent cleavage of replisome substrates in response to replication fork damage. Uses ATPase activity to process replisome substrates in S-phase, facilitating their proteolytic turnover from chromatin to ensure DNA replication and mitotic fidelity. Involved in the cytoplasmic maturation steps of pre-60S ribosomal particles by promoting the release of shuttling protein RSL24D1/RLP24 from the pre-ribosomal particles. The chain is AFG2-interacting ribosome maturation factor (Airim) from Mus musculus (Mouse).